The chain runs to 99 residues: UPF0213 protein YazA (99 aa).

One can recognise a GIY-YIG domain in the interval 4-79 (NNHFFYVVKC…KKLTRKKKEL (76 aa)).

The protein belongs to the UPF0213 family.

In Bacillus subtilis (strain 168), this protein is UPF0213 protein YazA (yazA).